We begin with the raw amino-acid sequence, 39 residues long: RRSLTRRVPEECEESCEEEEKTCCGLENGQPFCSRICWG.

The propeptide occupies 1-5; the sequence is RRSLT. 3 cysteine pairs are disulfide-bonded: Cys12-Cys24, Cys16-Cys33, and Cys23-Cys37. Trp38 carries the tryptophan amide modification.

This sequence belongs to the conotoxin O3 superfamily. As to expression, expressed by the venom duct.

It is found in the secreted. This is Conotoxin ArMSGL-013 from Conus arenatus (Sand-dusted cone).